We begin with the raw amino-acid sequence, 604 residues long: MTDVPVSRIRNFSIIAHIDHGKSTLADRMLQMTGTVEDRKMKEQFLDNLDLERERGITIKLQAARMNYTAQDGQHYVLNLIDTPGHVDFSYEVSRSLAACEGALLVVDASQGVEAQTLANVYLALENNLEIIPVLNKIDLPGAEPERVAQEIEEIVGLDCSGIIKASAKEGIGVNEILESIVHLVPPPDDTTNKPLRALIFDSYYDSYRGVVVYFRVMDGTVKKGDRVLLMASGKEYEIDELGVLSPHQIQVDELHAGEVGYFAAAIKTVEDARVGDTITLAPKPADEPLPGYKEAKPMVFCGLFPTDSDQYEDLRDALHKLKLNDAALNFEPETSTAMGFGFRCGFLGLLHMEIVQERLEREYDLDLITTAPSVVYRVTTTEEEVIEVDNPSQLPPPQKRIKIEEPYVHMEMITPETYVGALMELCQNRRGEFKDMRYFTQTRTALVYELPLAEIVTDFFDQLKSRTRGYASMEYHLIGYRENALVKLDIMVNGDGVDALAMIVHRDKAYNVGRALTEKLKELIPRHQFKVPIQAAIGSKVIASEHIPALRKDVLAKCYGGDITRKKKLLEKQAKGKKRMKSIGTVDVPQEAFMAVLRLNNES.

The tr-type G domain maps to serine 7–aspartate 189. Residues aspartate 19–threonine 24 and asparagine 136–aspartate 139 contribute to the GTP site.

This sequence belongs to the TRAFAC class translation factor GTPase superfamily. Classic translation factor GTPase family. LepA subfamily.

It localises to the cell inner membrane. It carries out the reaction GTP + H2O = GDP + phosphate + H(+). Required for accurate and efficient protein synthesis under certain stress conditions. May act as a fidelity factor of the translation reaction, by catalyzing a one-codon backward translocation of tRNAs on improperly translocated ribosomes. Back-translocation proceeds from a post-translocation (POST) complex to a pre-translocation (PRE) complex, thus giving elongation factor G a second chance to translocate the tRNAs correctly. Binds to ribosomes in a GTP-dependent manner. This chain is Elongation factor 4, found in Gloeothece citriformis (strain PCC 7424) (Cyanothece sp. (strain PCC 7424)).